The chain runs to 472 residues: RING-H2 finger protein ATL13 (472 aa).

Residues 51-71 (ILLIIIILSIIFFISGLLHLL) traverse the membrane as a helical segment. The segment at 134 to 176 (CAVCLCEFETEDKLRLLPKCSHAFHMDCIDTWLLSHSTCPLCR) adopts an RING-type; atypical zinc-finger fold. The disordered stretch occupies residues 320-340 (VSTKKQSSKNRGLPGHRTAMS).

It belongs to the RING-type zinc finger family. ATL subfamily.

It is found in the membrane. The enzyme catalyses S-ubiquitinyl-[E2 ubiquitin-conjugating enzyme]-L-cysteine + [acceptor protein]-L-lysine = [E2 ubiquitin-conjugating enzyme]-L-cysteine + N(6)-ubiquitinyl-[acceptor protein]-L-lysine.. It participates in protein modification; protein ubiquitination. The chain is RING-H2 finger protein ATL13 (ATL13) from Arabidopsis thaliana (Mouse-ear cress).